The following is a 593-amino-acid chain: Proline--tRNA ligase (593 aa).

Belongs to the class-II aminoacyl-tRNA synthetase family. ProS type 1 subfamily. In terms of assembly, homodimer.

The protein localises to the cytoplasm. It carries out the reaction tRNA(Pro) + L-proline + ATP = L-prolyl-tRNA(Pro) + AMP + diphosphate. Functionally, catalyzes the attachment of proline to tRNA(Pro) in a two-step reaction: proline is first activated by ATP to form Pro-AMP and then transferred to the acceptor end of tRNA(Pro). As ProRS can inadvertently accommodate and process non-cognate amino acids such as alanine and cysteine, to avoid such errors it has two additional distinct editing activities against alanine. One activity is designated as 'pretransfer' editing and involves the tRNA(Pro)-independent hydrolysis of activated Ala-AMP. The other activity is designated 'posttransfer' editing and involves deacylation of mischarged Ala-tRNA(Pro). The misacylated Cys-tRNA(Pro) is not edited by ProRS. This Synechococcus sp. (strain CC9902) protein is Proline--tRNA ligase.